A 361-amino-acid polypeptide reads, in one-letter code: Phospho-N-acetylmuramoyl-pentapeptide-transferase (361 aa).

10 helical membrane passes run 25–45, 73–93, 98–118, 139–159, 168–188, 200–220, 237–257, 264–284, 289–309, and 339–359; these read RGIL…PAVI, TMGG…WGDL, VWLV…DDWI, IFGL…AAIT, IALP…IVGF, GLAI…AYAS, AGEL…FLWF, VFMG…IAVI, MVLV…IIQV, and VIVR…ATLK.

The protein belongs to the glycosyltransferase 4 family. MraY subfamily. The cofactor is Mg(2+).

It is found in the cell inner membrane. It catalyses the reaction UDP-N-acetyl-alpha-D-muramoyl-L-alanyl-gamma-D-glutamyl-meso-2,6-diaminopimeloyl-D-alanyl-D-alanine + di-trans,octa-cis-undecaprenyl phosphate = di-trans,octa-cis-undecaprenyl diphospho-N-acetyl-alpha-D-muramoyl-L-alanyl-D-glutamyl-meso-2,6-diaminopimeloyl-D-alanyl-D-alanine + UMP. It functions in the pathway cell wall biogenesis; peptidoglycan biosynthesis. Functionally, catalyzes the initial step of the lipid cycle reactions in the biosynthesis of the cell wall peptidoglycan: transfers peptidoglycan precursor phospho-MurNAc-pentapeptide from UDP-MurNAc-pentapeptide onto the lipid carrier undecaprenyl phosphate, yielding undecaprenyl-pyrophosphoryl-MurNAc-pentapeptide, known as lipid I. The polypeptide is Phospho-N-acetylmuramoyl-pentapeptide-transferase (Xanthomonas oryzae pv. oryzae (strain MAFF 311018)).